A 109-amino-acid polypeptide reads, in one-letter code: Meiotically up-regulated gene 153 protein (109 aa).

It localises to the mitochondrion. In terms of biological role, has a role in meiosis. This chain is Meiotically up-regulated gene 153 protein (mug153), found in Schizosaccharomyces pombe (strain 972 / ATCC 24843) (Fission yeast).